We begin with the raw amino-acid sequence, 1029 residues long: mRNA 3'-end-processing protein rna14 (1029 aa).

2 disordered regions span residues 1–177 and 225–251; these read MAEE…PDVS and GNVQ…PHDR. The segment covering 21–32 has biased composition (basic and acidic residues); sequence VDYKAVEEHGAD. Polar residues-rich tracts occupy residues 43-79 and 104-119; these read KTLQ…NSVQ and TSTM…QPKT. Positions 127–140 are enriched in acidic residues; that stretch reads VEDEDEDDAGDADY. The segment covering 153 to 175 has biased composition (polar residues); sequence TVATNVPQQSVSGNENEASSTPD. A compositionally biased stretch (low complexity) spans 229–243; that stretch reads DSATATPTPDSPSTS. HAT repeat units lie at residues 281-313, 315-346, 357-392, 406-439, 469-509, and 521-553; these read NRFD…MESE, NDLY…YVRR, QARR…FIKS, QKMD…FEMG, ITRD…WEKG, and AFKG…FCFL. Disordered stretches follow at residues 634-664, 853-951, and 996-1023; these read TFAK…ESVK, TAVR…GSPA, and IPLP…SPSL. Residues 894–908 show a composition bias toward basic and acidic residues; it reads SPKRPLEDFDDDYNR. 2 stretches are compositionally biased toward polar residues: residues 932-949 and 1006-1023; these read RSQL…SQGS and GTTQ…SPSL.

It is found in the nucleus. The protein localises to the cytoplasm. Component of the cleavage factor IA (CFIA) complex, which is involved in the endonucleolytic cleavage during polyadenylation-dependent pre-mRNA 3'-end formation. This Aspergillus fumigatus (strain ATCC MYA-4609 / CBS 101355 / FGSC A1100 / Af293) (Neosartorya fumigata) protein is mRNA 3'-end-processing protein rna14 (rna14).